The sequence spans 418 residues: Lariat debranching enzyme (418 aa).

Residues cysteine 8, histidine 10, aspartate 39, and asparagine 84 each coordinate a divalent metal cation. The segment at 124–154 is lariat recognition loop; that stretch reads SGIYNERHYRSGHFERPPYNESTIRSVYHVR. Positions 174, 226, and 228 each coordinate a divalent metal cation. Residues 372-418 form a disordered region; that stretch reads GERTDIPASLAPSDLPTYDSEEIPIDDIDEIEEMEEAKADDHTRDDA. The span at 390-406 shows a compositional bias: acidic residues; the sequence is DSEEIPIDDIDEIEEME. The span at 407–418 shows a compositional bias: basic and acidic residues; the sequence is EAKADDHTRDDA.

Belongs to the lariat debranching enzyme family. Fe(2+) is required as a cofactor. The cofactor is Zn(2+). Mn(2+) serves as cofactor. In terms of tissue distribution, widely expressed. Expressed in roots, stems, cauline and rosette leaves, flower buds and siliques.

It localises to the nucleus. Its activity is regulated as follows. Active in presence of diverse metals including Fe(2+), Zn(2+), Mn(2+). Binds two metal cations in two adjacent alpha and beta metal-binding pockets. In terms of biological role, cleaves the 2'-5' phosphodiester linkage at the branch point of lariat intron pre-mRNAs after splicing and converts them into linear molecules that are subsequently degraded. It thereby facilitates ribonucleotide turnover. It may also participate in retrovirus replication via an RNA lariat intermediate in cDNA synthesis. Plays en essential role during embryogenesis. In Arabidopsis thaliana (Mouse-ear cress), this protein is Lariat debranching enzyme (DBR1).